A 79-amino-acid polypeptide reads, in one-letter code: Exodeoxyribonuclease 7 small subunit (79 aa).

The protein belongs to the XseB family. In terms of assembly, heterooligomer composed of large and small subunits.

The protein localises to the cytoplasm. It catalyses the reaction Exonucleolytic cleavage in either 5'- to 3'- or 3'- to 5'-direction to yield nucleoside 5'-phosphates.. Functionally, bidirectionally degrades single-stranded DNA into large acid-insoluble oligonucleotides, which are then degraded further into small acid-soluble oligonucleotides. The polypeptide is Exodeoxyribonuclease 7 small subunit (Lactococcus lactis subsp. cremoris (strain SK11)).